A 47-amino-acid polypeptide reads, in one-letter code: MKKVPLNCENCGNRNYNVPKKEGSATRLTLKKYCPRCNAHTVHKESK.

Belongs to the bacterial ribosomal protein bL33 family.

This Staphylococcus epidermidis (strain ATCC 35984 / DSM 28319 / BCRC 17069 / CCUG 31568 / BM 3577 / RP62A) protein is Large ribosomal subunit protein bL33C.